A 329-amino-acid chain; its full sequence is Protein SPATA31F3 (329 aa).

A helical membrane pass occupies residues 11–31 (VGYSVYTYGSIFIIALIIWQV). Residues 58–85 (SDRATRAKRTSKEEAEKLQKLLDTMKSQ) adopt a coiled-coil conformation. Disordered stretches follow at residues 149–184 (ADRSSELTYQDTRDVSLSSRFPQSQETDQQSTRSAT), 201–250 (QQLD…AAPT), and 288–329 (KPMT…KRNI). Phosphoserine is present on residues serine 152 and serine 153. Polar residues-rich tracts occupy residues 154–184 (ELTYQDTRDVSLSSRFPQSQETDQQSTRSAT) and 201–223 (QQLDPQGSKMTQDAKGLSSSSTD). Basic residues predominate over residues 232 to 242 (QKKRKKTKKLA). The segment covering 293-320 (EPEKTHSPVRDQAEGAEKKKKPECDLKA) has biased composition (basic and acidic residues).

The protein belongs to the SPATA31 family.

The protein resides in the membrane. This chain is Protein SPATA31F3, found in Rattus norvegicus (Rat).